We begin with the raw amino-acid sequence, 480 residues long: Chromosomal replication initiator protein DnaA (480 aa).

Residues 1-71 form a domain I, interacts with DnaA modulators region; the sequence is MRHDALFERV…TTLVQQEDSE (71 aa). The interval 71 to 137 is domain II; it reads EILKVEILVR…RPVQAPLFGS (67 aa). Positions 138–360 are domain III, AAA+ region; sequence PLDQRYGFDS…GAFNQLLFRR (223 aa). ATP-binding residues include Gly184, Gly186, Lys187, and Thr188. A domain IV, binds dsDNA region spans residues 361–480; it reads SFEPQLSIER…IELLKRLINE (120 aa).

This sequence belongs to the DnaA family. As to quaternary structure, oligomerizes as a right-handed, spiral filament on DNA at oriC.

The protein resides in the cytoplasm. Its function is as follows. Plays an essential role in the initiation and regulation of chromosomal replication. ATP-DnaA binds to the origin of replication (oriC) to initiate formation of the DNA replication initiation complex once per cell cycle. Binds the DnaA box (a 9 base pair repeat at the origin) and separates the double-stranded (ds)DNA. Forms a right-handed helical filament on oriC DNA; dsDNA binds to the exterior of the filament while single-stranded (ss)DNA is stabiized in the filament's interior. The ATP-DnaA-oriC complex binds and stabilizes one strand of the AT-rich DNA unwinding element (DUE), permitting loading of DNA polymerase. After initiation quickly degrades to an ADP-DnaA complex that is not apt for DNA replication. Binds acidic phospholipids. The sequence is that of Chromosomal replication initiator protein DnaA from Rhizobium meliloti (strain 1021) (Ensifer meliloti).